We begin with the raw amino-acid sequence, 344 residues long: Protein BIM1 (344 aa).

Ser2 carries the post-translational modification N-acetylserine. The 102-residue stretch at 6 to 107 (GESRTELLTW…FLQWLKKHWI (102 aa)) folds into the Calponin-homology (CH) domain. A disordered region spans residues 126–173 (IITNNSATKPRTVSNPTTAKRSSSTGTGSAMSGGLATRHSSLGINGSR). Polar residues predominate over residues 127–146 (ITNNSATKPRTVSNPTTAKR). Residues 147 to 159 (SSSTGTGSAMSGG) are compositionally biased toward low complexity. Ser157 is subject to Phosphoserine. Over residues 163–173 (RHSSLGINGSR) the composition is skewed to polar residues. An EB1 C-terminal domain is found at 188 to 281 (ELTKSQETIG…LYATAEGFEM (94 aa)). Positions 292-312 (NLGEHGTVPNQGGYANSNGEV) are disordered.

Belongs to the MAPRE family.

It localises to the cytoplasm. The protein localises to the cytoskeleton. Its function is as follows. Binds microtubules. The polypeptide is Protein BIM1 (BIM1) (Saccharomyces cerevisiae (strain ATCC 204508 / S288c) (Baker's yeast)).